Consider the following 500-residue polypeptide: Centrosomal protein of 57 kDa (500 aa).

The span at 1 to 17 (MAAASVSAASGSHLSNS) shows a compositional bias: low complexity. 2 disordered regions span residues 1-34 (MAAA…HSSS) and 43-62 (KPFL…LAYP). A compositionally biased stretch (polar residues) spans 18-34 (FAEPSRSNGSMVRHSSS). Phosphoserine is present on residues Ser-53 and Ser-55. The tract at residues 58–239 (TLAYPESNSR…KAAELQTGLE (182 aa)) is centrosome localization domain (CLD). Coiled-coil stretches lie at residues 63 to 242 (ESNS…ETNR) and 392 to 492 (ELKD…NSLQ). Positions 277–491 (GAQPHYRLCL…KDMQSIQNSL (215 aa)) are mediates interaction with microtubules. A compositionally biased stretch (basic and acidic residues) spans 434 to 450 (KKELKATKKTLDEERNS). Positions 434–472 (KKELKATKKTLDEERNSSSRSGITGTTNKKDFMKLRPGE) are disordered. Polar residues predominate over residues 451 to 460 (SSRSGITGTT). Positions 461–471 (NKKDFMKLRPG) are enriched in basic and acidic residues.

Belongs to the translokin family. In terms of assembly, homodimer and homooligomer. Interacts with microtubules. Interacts with FGF2 and RAP80. Does not interact with FGF1 or FGF2 isoform 24 kDa. Ubiquitous.

The protein resides in the nucleus. Its subcellular location is the cytoplasm. It localises to the cytoskeleton. It is found in the microtubule organizing center. The protein localises to the centrosome. Its function is as follows. Centrosomal protein which may be required for microtubule attachment to centrosomes. May act by forming ring-like structures around microtubules. Mediates nuclear translocation and mitogenic activity of the internalized growth factor FGF2, but that of FGF1. The polypeptide is Centrosomal protein of 57 kDa (CEP57) (Homo sapiens (Human)).